Reading from the N-terminus, the 324-residue chain is Glyoxylate/hydroxypyruvate reductase B (324 aa).

Catalysis depends on residues Arg-237 and Glu-266. His-285 functions as the Proton donor in the catalytic mechanism.

Belongs to the D-isomer specific 2-hydroxyacid dehydrogenase family. GhrB subfamily. In terms of assembly, homodimer.

It localises to the cytoplasm. It carries out the reaction glycolate + NADP(+) = glyoxylate + NADPH + H(+). The catalysed reaction is (R)-glycerate + NAD(+) = 3-hydroxypyruvate + NADH + H(+). The enzyme catalyses (R)-glycerate + NADP(+) = 3-hydroxypyruvate + NADPH + H(+). Catalyzes the NADPH-dependent reduction of glyoxylate and hydroxypyruvate into glycolate and glycerate, respectively. This chain is Glyoxylate/hydroxypyruvate reductase B, found in Shigella flexneri.